The sequence spans 415 residues: uncharacterized protein (415 aa).

Residues C85, C91, C94, and C175 each contribute to the [4Fe-4S] cluster site. The S-adenosyl-L-methionine site is built by Q248, Y276, E297, and N344. The active-site Nucleophile is C371.

It belongs to the class I-like SAM-binding methyltransferase superfamily. RNA M5U methyltransferase family.

This is an uncharacterized protein from Leptospira interrogans serogroup Icterohaemorrhagiae serovar copenhageni (strain Fiocruz L1-130).